Here is a 312-residue protein sequence, read N- to C-terminus: Methionyl-tRNA formyltransferase (312 aa).

The segment at P34–A54 is disordered. (6S)-5,6,7,8-tetrahydrofolate is bound at residue S110 to P113.

It belongs to the Fmt family.

The enzyme catalyses L-methionyl-tRNA(fMet) + (6R)-10-formyltetrahydrofolate = N-formyl-L-methionyl-tRNA(fMet) + (6S)-5,6,7,8-tetrahydrofolate + H(+). Its function is as follows. Attaches a formyl group to the free amino group of methionyl-tRNA(fMet). The formyl group appears to play a dual role in the initiator identity of N-formylmethionyl-tRNA by promoting its recognition by IF2 and preventing the misappropriation of this tRNA by the elongation apparatus. The sequence is that of Methionyl-tRNA formyltransferase from Mycobacterium tuberculosis (strain ATCC 25177 / H37Ra).